Reading from the N-terminus, the 520-residue chain is Zinc finger and BTB domain-containing protein 18 (520 aa).

Positions 24-91 (CDCTVLVGDA…MYEGILQFKG (68 aa)) constitute a BTB domain. Residues 121 to 140 (ATTDSTKKEEDTSSFSDKVE) are disordered. 4 C2H2-type zinc fingers span residues 368–390 (FMCPLCNKVFPSPHILQIHLSTH), 408–430 (PTCSLCGKTFSCMYTLKRHERTH), 436–458 (YTCTQCGKSFQYSHNLSRHAVVH), and 464–487 (HACKWCERRFTQSGDLYRHIRKFH).

The protein belongs to the krueppel C2H2-type zinc-finger protein family. ZBTB18 subfamily.

Its subcellular location is the nucleus. Functionally, transcriptional repressor that plays a role in various developmental processes. Specifically binds the consensus DNA sequence 5'-[AC]ACATCTG[GT][AC]-3' which contains the E box core, and acts by recruiting chromatin remodeling multiprotein complexes. The protein is Zinc finger and BTB domain-containing protein 18 (zbtb18) of Xenopus laevis (African clawed frog).